The primary structure comprises 58 residues: Large ribosomal subunit protein bL32 (58 aa).

Belongs to the bacterial ribosomal protein bL32 family.

The chain is Large ribosomal subunit protein bL32 from Prochlorococcus marinus (strain MIT 9515).